The following is a 2703-amino-acid chain: Neurogenic locus Notch protein (2703 aa).

An N-terminal signal peptide occupies residues 1-52; the sequence is MQSQRSRRRSRAPNTWICFWINKMHAVASLPASLPLLLLTLAFANLPNTVRG. Residues 53–1745 are Extracellular-facing; that stretch reads TDTALVAASC…NGEPPANVKY (1693 aa). 4 consecutive EGF-like domains span residues 58 to 95, 96 to 136, 139 to 176, and 177 to 215; these read VAAS…DYCE, HRNP…SLCE, VPNA…ERCE, and TKNL…DTCS. Cystine bridges form between C62/C73, C67/C83, C85/C94, C100/C111, C105/C124, C126/C135, C143/C154, C148/C164, C166/C175, C181/C192, C186/C203, C205/C214, C221/C232, C226/C241, C243/C252, C259/C270, C264/C279, C281/C290, C297/C308, C302/C317, C319/C328, C335/C349, C343/C358, and C360/C369. An O-linked (Fuc...) threonine glycan is attached at T72. The O-linked (Fuc...) threonine glycan is linked to T110. T153 is a glycosylation site (O-linked (Fuc...) threonine). O-linked (Glc...) serine glycosylation is present at S183. The O-linked (Fuc...) threonine glycan is linked to T191. T210 carries O-linked (GlcNAc...) threonine glycosylation. The EGF-like 5; calcium-binding domain occupies 217-253; the sequence is DIEECQSNPCKYGGTCVNTHGSYQCMCPTGYTGKDCD. O-linked (Glc...) serine glycosylation is present at S223. Residue T231 is glycosylated (O-linked (Fuc...) threonine). The region spanning 255–291 is the EGF-like 6 domain; that stretch reads KYKPCSPSPCQNGGICRSNGLSYECKCPKGFEGKNCE. One can recognise an EGF-like 7; calcium-binding domain in the interval 293–329; it reads NYDDCLGHLCQNGGTCIDGISDYTCRCPPNFTGRFCQ. An O-linked (Fuc...) threonine glycan is attached at T307. N322 carries N-linked (GlcNAc...) asparagine glycosylation. The EGF-like 8; calcium-binding domain occupies 331–370; sequence DVDECAQRDHPVCQNGATCTNTHGSYSCICVNGWAGLDCS. Residue T348 is glycosylated (O-linked (Fuc...) threonine). N-linked (GlcNAc...) asparagine glycosylation occurs at N371. Residues 372–408 enclose the EGF-like 9; calcium-binding domain; sequence NTDDCKQAACFYGATCIDGVGSFYCQCTKGKTGLLCH. Cystine bridges form between C376–C387, C381–C396, C398–C407, C413–C424, C418–C435, C437–C446, C453–C465, and C459–C474. The O-linked (Fuc...) threonine glycan is linked to T386. Residues 409-447 form the EGF-like 10 domain; the sequence is LDDACTSNPCHADAICDTSPINGSYACSCATGYKGVDCS. S427 carries an O-linked (Glc...) serine glycan. N-linked (GlcNAc...) asparagine glycosylation is present at N430. The EGF-like 11; calcium-binding domain occupies 449–486; the sequence is DIDECDQGSPCEHNGICVNTPGSYRCNCSQGFTGPRCE. A glycan (N-linked (GlcNAc...) asparagine) is linked at N475. Intrachain disulfides connect C476–C485, C492–C503, C497–C512, C514–C523, C530–C541, C535–C550, C552–C561, C568–C579, C573–C588, C590–C599, C606–C616, C611–C625, C627–C636, C643–C654, C648–C663, C665–C674, C681–C692, C686–C701, C703–C712, C719–C730, C724–C739, C741–C750, C757–C768, C762–C777, C779–C788, C795–C806, C800–C815, C817–C826, C833–C844, C838–C853, C855–C864, C871–C882, C876–C893, C895–C904, C911–C923, C917–C932, C934–C943, C950–C961, C955–C970, C972–C981, C988–C999, C993–C1008, C1010–C1019, C1026–C1037, C1031–C1046, C1048–C1057, C1064–C1075, C1069–C1084, C1086–C1095, C1102–C1113, C1107–C1122, C1124–C1133, C1155–C1160, C1171–C1180, C1187–C1198, C1192–C1207, C1209–C1218, C1225–C1236, C1230–C1245, C1247–C1256, C1263–C1274, C1268–C1283, C1285–C1294, C1301–C1314, C1306–C1323, C1325–C1334, C1341–C1352, C1346–C1361, C1363–C1372, C1379–C1389, C1384–C1400, C1402–C1411, C1419–C1430, C1424–C1439, C1441–C1450, C1482–C1505, C1487–C1500, and C1496–C1512. T481 carries O-linked (GlcNAc...) threonine glycosylation. Residues 488-524 enclose the EGF-like 12; calcium-binding domain; that stretch reads NINECESHPCQNEGSCLDDPGTFRCVCMPGFTGTQCE. The O-linked (Glc...) serine glycan is linked to S494. O-linked (Fuc...) serine glycosylation occurs at S502. T519 carries O-linked (GlcNAc...) threonine glycosylation. In terms of domain architecture, EGF-like 13; calcium-binding spans 526-562; that stretch reads DIDECQSNPCLNDGTCHDKINGFKCSCALGFTGARCQ. S532 is a glycosylation site (O-linked (Glc...) serine). Residues 564–600 enclose the EGF-like 14; calcium-binding domain; sequence NIDDCQSQPCRNRGICHDSIAGYSCECPPGYTGTSCE. S570 carries an O-linked (Glc...) serine glycan. Residue T595 is glycosylated (O-linked (GlcNAc...) threonine). The EGF-like 15; calcium-binding domain maps to 602 to 637; it reads NINDCDSNPCHRGKCIDDVNSFKCLCDPGYTGYICQ. S608 is a glycosylation site (O-linked (Glc...) serine). In terms of domain architecture, EGF-like 16; calcium-binding spans 639 to 675; the sequence is QINECESNPCQFDGHCQDRVGSYYCQCQAGTSGKNCE. S645 carries an O-linked (Glc...) serine glycan. The EGF-like 17; calcium-binding domain maps to 677–713; that stretch reads NVNECHSNPCNNGATCIDGINSYKCQCVPGFTGQHCE. S683 carries an O-linked (Glc...) serine glycan. The O-linked (Fuc...) threonine glycan is linked to T691. In terms of domain architecture, EGF-like 18; calcium-binding spans 715–751; sequence NVDECISSPCANNGVCIDQVNGYKCECPRGFYDAHCL. S721 carries an O-linked (Glc...) serine glycan. The EGF-like 19; calcium-binding domain occupies 753–789; the sequence is DVDECASNPCVNEGRCEDGINEFICHCPPGYTGKRCE. O-linked (Glc...) serine glycosylation is present at S759. In terms of domain architecture, EGF-like 20; calcium-binding spans 791–827; the sequence is DIDECSSNPCQHGGTCYDKLNAFSCQCMPGYTGQKCE. S797 carries an O-linked (Glc...) serine glycan. T805 carries an O-linked (Fuc...) threonine glycan. T822 is a glycosylation site (O-linked (GlcNAc...) threonine). Residues 829–865 enclose the EGF-like 21; calcium-binding domain; the sequence is NIDDCVTNPCGNGGTCIDKVNGYKCVCKVPFTGRDCE. An O-linked (Fuc...) threonine glycan is attached at T843. An EGF-like 22 domain is found at 867-905; the sequence is KMDPCASNRCKNEAKCTPSSNFLDFSCTCKLGYTGRYCD. The region spanning 907–944 is the EGF-like 23; calcium-binding domain; sequence DIDECSLSSPCRNGASCLNVPGSYRCLCTKGYEGRDCA. S922 is a glycosylation site (O-linked (Fuc...) serine). Residues 946–982 form the EGF-like 24; calcium-binding domain; it reads NTDDCASFPCQNGGTCLDGIGDYSCLCVDGFDGKHCE. The O-linked (Glc...) serine glycan is linked to S952. T960 is a glycosylation site (O-linked (Fuc...) threonine). Positions 984–1020 constitute an EGF-like 25 domain; that stretch reads DINECLSQPCQNGATCSQYVNSYTCTCPLGFSGINCQ. A glycan (O-linked (Glc...) serine) is linked at S990. A glycan (O-linked (Fuc...) threonine) is linked at T998. In terms of domain architecture, EGF-like 26; calcium-binding spans 1022-1058; that stretch reads NDEDCTESSCLNGGSCIDGINGYNCSCLAGYSGANCQ. S1036 is a glycosylation site (O-linked (Fuc...) serine). N1045 carries an N-linked (GlcNAc...) asparagine glycan. 3 EGF-like domains span residues 1060–1096, 1098–1134, and 1136–1181; these read KLNK…KQCS, YVDW…KLCD, and QTIS…SYCQ. A glycan (O-linked (Glc...) serine) is linked at S1066. T1074 carries O-linked (Fuc...) threonine glycosylation. Residue T1112 is glycosylated (O-linked (Fuc...) threonine). N1157 is a glycosylation site (N-linked (GlcNAc...) asparagine). The EGF-like 30; calcium-binding domain maps to 1183-1219; sequence EIDECQSQPCQNGGTCRDLIGAYECQCRQGFQGQNCE. Residue S1189 is glycosylated (O-linked (Glc...) serine). T1197 carries an O-linked (Fuc...) threonine glycan. The region spanning 1221 to 1257 is the EGF-like 31; calcium-binding domain; that stretch reads NIDDCAPNPCQNGGTCHDRVMNFSCSCPPGTMGIICE. T1235 is a glycosylation site (O-linked (Fuc...) threonine). N1242 is a glycosylation site (N-linked (GlcNAc...) asparagine). Residues 1259 to 1295 enclose the EGF-like 32; calcium-binding domain; that stretch reads NKDDCKPGACHNNGSCIDRVGGFECVCQPGFVGARCE. N-linked (GlcNAc...) asparagine glycosylation is present at N1271. S1273 is a glycosylation site (O-linked (Fuc...) serine). EGF-like domains are found at residues 1297 to 1335, 1337 to 1373, 1375 to 1412, and 1415 to 1451; these read DINE…RHCE, KVDF…KNCE, SGQD…EHCE, and TLDE…KRCD. S1303 carries an O-linked (Glc...) serine glycan. The O-linked (Glc...) serine glycan is linked to S1381. LNR repeat units lie at residues 1482 to 1521, 1522 to 1557, and 1559 to 1599; these read CDKR…PWAN, CTAN…RKLK, and CDSL…TQSP. Residue N1521 is glycosylated (N-linked (GlcNAc...) asparagine). Cystine bridges form between C1522–C1545, C1527–C1540, C1536–C1552, C1559–C1585, C1567–C1580, and C1576–C1592. N-linked (GlcNAc...) asparagine glycans are attached at residues N1594 and N1627. The helical transmembrane segment at 1746–1766 threads the bilayer; that stretch reads VITGIILVIIALAFFGMVLST. Over 1767-2703 the chain is Cytoplasmic; sequence QRKRAHGVTW…ANKGSEAIYI (937 aa). Positions 1810–1850 are disordered; that stretch reads QSQGVGQPGAHWSDDESDMPLPKRQRSDPVSGVGLGNNGGY. ANK repeat units lie at residues 1901 to 1945, 1950 to 1979, 1983 to 2013, 2017 to 2046, 2050 to 2079, 2083 to 2112, and 2116 to 2139; these read CGLT…ELNA, TGET…DANC, TGRT…NLNA, DGTT…DINA, SGKT…NRDA, KDET…NREI, and MDRL…LDEH. Residues 2172–2257 form a disordered region; that stretch reads TVISAGNGGN…LTGGVSGVPG (86 aa). Over residues 2228–2238 the composition is skewed to low complexity; the sequence is KKTSAASKKAA. Positions 2325–2328 are interaction with Nedd4; that stretch reads PPSY. Disordered regions lie at residues 2399-2452, 2488-2524, 2579-2620, and 2632-2703; these read SGAG…PTSP, GGGG…APPQ, LDLN…PSSQ, and PSSQ…AIYI. Residues 2414–2429 are compositionally biased toward polar residues; that stretch reads PYSNQSPPHSVQSSLA. S2447 bears the Phosphoserine mark. Positions 2488-2497 are enriched in gly residues; it reads GGGGGGGVGQ. Low complexity predominate over residues 2598–2619; it reads PPSIQSSMSGSSPSTNMLSPSS. Residues 2632 to 2653 are compositionally biased toward polar residues; the sequence is PSSQHSGGHTPQHLVQTLDSYP. Residues 2659 to 2675 are compositionally biased toward low complexity; it reads SPGHWSSSSPRSNSDWS. The segment covering 2677-2687 has biased composition (polar residues); the sequence is GVQSPAANNLY.

This sequence belongs to the NOTCH family. In terms of assembly, homomer. Interacts with Su(H) when activated. Interacts with Dx via its ANK repeats. Interacts with Delta via the EGF repeats and the Delta EGF repeats. Interacts with Nedd4 and Su(dx). Interacts with O-fut1; the interaction glycosylates N and transports N to early endosomes. Interacts with Akap200; the interaction stabilizes N/Notch protein levels by preventing Cbl-mediated ubiquitination and subsequent lysosomal degradation of N/Notch. In terms of processing, upon binding its ligands such as Delta or Serrate, it is cleaved (S2 cleavage) in its extracellular domain, close to the transmembrane domain. S2 cleavage is probably mediated by Kuz. It is then cleaved (S3 cleavage) downstream of its transmembrane domain, releasing it from the cell membrane. S3 cleavage requires Psn. Post-translationally, O-glycosylated. Three forms of O-glycosylation (O-fucosylation, O-glucosylation and O-GlcNAcylation) are detected. O-fucosylated by O-fut1 and fng in the EGF repeat domain inhibits both Serrate/Ser- and Delta/Dl-binding. O-glucosylation by rumi in the endoplasmic reticulum is necessary for correct folding and signaling. Ubiquitinated by various ubiquitin ligases; which promotes ligand-independent endocytosis and proteasomal degradation. Ubiquitinated by Nedd4. May also be ubiquitinated by Su(dx) and Cbl. Mono-ubiquitinated, possibly by dx/deltex; this may be involved in the ESCRT-III mediated targeting to multivesicular bodies.

It localises to the cell membrane. The protein localises to the endosome. Its subcellular location is the multivesicular body. The protein resides in the nucleus. Its function is as follows. Essential signaling protein which has a major role in many developmental processes. Functions as a receptor for membrane-bound ligands Delta and Serrate to regulate cell-fate determination. Upon ligand activation, and releasing from the cell membrane, the Notch intracellular domain (NICD) forms a transcriptional activator complex with Su(H) (Suppressor of hairless) and activates genes of the E(spl) complex. Regulates oogenesis, the differentiation of the ectoderm and the development of the central and peripheral nervous system, eye, wing disk, muscles and segmental appendages such as antennae and legs, through lateral inhibition or induction. Regulates neuroblast self-renewal, identity and proliferation through the regulation of bHLH-O proteins; in larval brains, involved in the maintenance of type II neuroblast self-renewal and identity by suppressing erm expression together with pnt; might also regulate dpn expression through the activation of the transcriptional regulator Su(H). Targeted for ESCRT-mediated endosomal sequestration and lysosomal degradation by various E3 ubiquitin ligases to regulate the Notch signaling pathway. Can undergo ligand-dependent and non-canonical ligand-independent activation. Ligand-independent activation is dependent on endosome acidification and probably occurs in late endosomes or lysosome. Ectopic ligand-independent activation occurs when disruption of the endolysosomal pathway, particularly of the ESCRT-III complex, prevents sequestration of the receptor in intraluminal vesicles of multivesicular bodies. In Drosophila melanogaster (Fruit fly), this protein is Neurogenic locus Notch protein.